Consider the following 310-residue polypeptide: Porphobilinogen deaminase (310 aa).

Cys-241 carries the post-translational modification S-(dipyrrolylmethanemethyl)cysteine.

The protein belongs to the HMBS family. Monomer. It depends on dipyrromethane as a cofactor.

The catalysed reaction is 4 porphobilinogen + H2O = hydroxymethylbilane + 4 NH4(+). It participates in porphyrin-containing compound metabolism; protoporphyrin-IX biosynthesis; coproporphyrinogen-III from 5-aminolevulinate: step 2/4. Its function is as follows. Tetrapolymerization of the monopyrrole PBG into the hydroxymethylbilane pre-uroporphyrinogen in several discrete steps. This chain is Porphobilinogen deaminase, found in Pelobacter propionicus (strain DSM 2379 / NBRC 103807 / OttBd1).